The primary structure comprises 480 residues: NADH-quinone oxidoreductase subunit N (480 aa).

13 helical membrane-spanning segments follow: residues 11-31 (VIPELFVLGMACAILVIDLFV), 38-58 (ITYGLSQFTLIGAAILTIALA), 74-94 (GLSDLLKVAVYLITAVVFLYS), 109-129 (YVLGLFGVLGMMIMISSYSFL), 163-183 (FILGAIASGMLLYGMSILYGI), 200-220 (GAGLNVPLVFALSFVIVGLAF), 239-259 (PTSVTLFIGTAPKLAGLAIIM), 273-293 (WQGMLTILAVLSLAVGNVVAI), 301-321 (MLAYSTISHVGFILMGILAGT), 329-349 (LFYTLVYAIVAAGGFGMIILL), 372-392 (FAFIMLLIMFSMAGVPPTVGF), 405-425 (VEMIWLAIFAVIFSIVGAFYY), and 451-471 (VVLSINGLLVIVLGIFPGLLM).

This sequence belongs to the complex I subunit 2 family. In terms of assembly, NDH-1 is composed of 14 different subunits. Subunits NuoA, H, J, K, L, M, N constitute the membrane sector of the complex.

It localises to the cell inner membrane. It carries out the reaction a quinone + NADH + 5 H(+)(in) = a quinol + NAD(+) + 4 H(+)(out). Functionally, NDH-1 shuttles electrons from NADH, via FMN and iron-sulfur (Fe-S) centers, to quinones in the respiratory chain. The immediate electron acceptor for the enzyme in this species is believed to be ubiquinone. Couples the redox reaction to proton translocation (for every two electrons transferred, four hydrogen ions are translocated across the cytoplasmic membrane), and thus conserves the redox energy in a proton gradient. This chain is NADH-quinone oxidoreductase subunit N, found in Thioalkalivibrio sulfidiphilus (strain HL-EbGR7).